Reading from the N-terminus, the 56-residue chain is Large ribosomal subunit protein bL32 (56 aa).

The interval Met1–Pro23 is disordered. Basic residues predominate over residues Thr9–His19.

This sequence belongs to the bacterial ribosomal protein bL32 family.

The sequence is that of Large ribosomal subunit protein bL32 from Blochmanniella floridana.